The primary structure comprises 153 residues: Prefoldin subunit alpha (153 aa).

The protein belongs to the prefoldin subunit alpha family. As to quaternary structure, heterohexamer of two alpha and four beta subunits.

Its subcellular location is the cytoplasm. Its function is as follows. Molecular chaperone capable of stabilizing a range of proteins. Seems to fulfill an ATP-independent, HSP70-like function in archaeal de novo protein folding. The sequence is that of Prefoldin subunit alpha from Methanothrix thermoacetophila (strain DSM 6194 / JCM 14653 / NBRC 101360 / PT) (Methanosaeta thermophila).